The following is a 206-amino-acid chain: 2-phospho-L-lactate guanylyltransferase (206 aa).

It belongs to the CofC family. Homodimer.

The catalysed reaction is (2S)-2-phospholactate + GTP + H(+) = (2S)-lactyl-2-diphospho-5'-guanosine + diphosphate. It participates in cofactor biosynthesis; coenzyme F420 biosynthesis. Guanylyltransferase that catalyzes the activation of (2S)-2-phospholactate (2-PL) as (2S)-lactyl-2-diphospho-5'-guanosine, via the condensation of 2-PL with GTP. It is involved in the biosynthesis of coenzyme F420, a hydride carrier cofactor. The protein is 2-phospho-L-lactate guanylyltransferase of Haloferax volcanii (strain ATCC 29605 / DSM 3757 / JCM 8879 / NBRC 14742 / NCIMB 2012 / VKM B-1768 / DS2) (Halobacterium volcanii).